Reading from the N-terminus, the 3295-residue chain is Toxin CdiA (3295 aa).

The interval Pro33–Ala366 is two-partner system transport domain (TPS). The chain crosses the membrane as a helical span at residues Leu55 to Ser75. Positions Gly353–Asn1574 are FHA-1. Residues Pro1165–Pro1185 form a disordered region. Residues Arg1575–Pro1796 are receptor binding domain (RBD). The YP domain stretch occupies residues Gly1797 to Asn1977. The disordered stretch occupies residues Asn1806 to Thr1831. A periplasmic FHA-1 repeat (pFR) region spans residues Gly1998–Asn2035. The segment at Leu2022 to Ser2676 is FHA-2. Disordered regions lie at residues Thr2260–Ser2292 and Gln2823–Glu2847. Residues Gln2823–Gly2838 show a composition bias toward polar residues. Positions Val3073 to Asn3076 match the VENN CT cleavage motif motif. The segment at Val3073–Lys3295 is CT domain. The disordered stretch occupies residues Ser3276–Lys3295. Over residues Gln3286 to Lys3295 the composition is skewed to basic and acidic residues.

The protein in the N-terminal section; belongs to the CdiA toxin family. In terms of assembly, probably interacts with cognate immunity protein CdiI.

The protein resides in the membrane. It localises to the target cell. It is found in the target cell cytoplasm. In terms of biological role, toxic component of a toxin-immunity protein module, which functions as a cellular contact-dependent growth inhibition (CDI) system. CDI modules allow bacteria to communicate with and inhibit the growth of closely related neighboring bacteria in a contact-dependent fashion. CDI is neutralized by its cognate immunity protein CdiI, but not by non-cognate CdiI from other bacteria. Functionally, the CdiA protein is thought to be exported from the cell through the central lumen of CdiB, the other half of its two-partner system (TPS). The TPS domain probably remains associated with CdiB while the FHA-1 domain forms an extended filament with the receptor-binding domain (RBD) at its extremity; in the secretion arrested state the C-terminus of the RBD and YP domains form a hairpin-like structure as the FHA-2, PT and CT domains are periplasmic. The YP domain is probably responsible for this arrest at the point where it re-enters the host cell periplasm. Upon binding to a target cell outer membrane receptor a signal is transmitted to activate secretion. The filament elongates slightly, the rest of CdiA is secreted and the FHA-2 domain becomes stably associated with the target cell's outer membrane where it facilitates entry of the toxic CT domain into the target cell periplasm. From there the toxic CT domain is cleaved and gains access to the target cell cytoplasm via an inner membrane protein. The polypeptide is Toxin CdiA (Yersinia pestis).